Here is a 292-residue protein sequence, read N- to C-terminus: GID complex substrate-recognition subunit 10 (292 aa).

It belongs to the GID4/VID24 family. Substrate-recognition component of the GID/CTLH ubiquitin ligase complex. In the absence of stress, the complex exists as an inactive anticipatory complex (GID(Ant)), composed of VID30/GID1, the E3 ubiquitin-ligase RMD5/GID2, VID28/GID5, GID8, and the RING-like subunit FYV10/GID9, awaiting a substrate receptor to form the active E3 ligase complex. When cells are shifted to glucose-containing medium, the substrate receptor VID24/GID4 is induced and becomes part of the complex, named GID(SR4). Under osmotic or heat stress, the substrate receptor GID10 is induced and becomes part of the complex, named GID(SR10). Interacts with proteins that have an N-terminal Pro/N-degron, including ART2.

Substrate-recognition component of the GID E3 ligase complex recruiting N termini and catalyzing ubiquitination of proteins targeted for degradation. GID E3 is regulated through assembly with interchangeable N-degron-binding substrate receptors induced by distinct environmental perturbations. Required for the adaptation to osmotic or heat stress. Required for the regulation of protein levels of the adapter protein ART2, a component of the ART-Rsp5 ubiquitin ligase pathway, part of the plasma membrane quality control. Specific for substrates with an N-terminal Pro (Pro/N-degron), including ART2. Has high affinity for the N-terminal sequence Pro-Tyr-Ile-Thr, and also recognizes nonproline residues such as Met-Tyr-Ile-Thr-Val or Val-Cys-Phe-His. This chain is GID complex substrate-recognition subunit 10, found in Saccharomyces cerevisiae (strain ATCC 204508 / S288c) (Baker's yeast).